A 1097-amino-acid chain; its full sequence is DNA-directed RNA polymerase subunit beta (1097 aa).

The tract at residues 1071-1097 (MQDVNPKRNTPSRPTYESLGTSEYAED) is disordered. Positions 1077–1091 (KRNTPSRPTYESLGT) are enriched in polar residues.

The protein belongs to the RNA polymerase beta chain family. In terms of assembly, in cyanobacteria the RNAP catalytic core is composed of 2 alpha, 1 beta, 1 beta', 1 gamma and 1 omega subunit. When a sigma factor is associated with the core the holoenzyme is formed, which can initiate transcription.

It carries out the reaction RNA(n) + a ribonucleoside 5'-triphosphate = RNA(n+1) + diphosphate. Its function is as follows. DNA-dependent RNA polymerase catalyzes the transcription of DNA into RNA using the four ribonucleoside triphosphates as substrates. The sequence is that of DNA-directed RNA polymerase subunit beta from Prochlorococcus marinus subsp. pastoris (strain CCMP1986 / NIES-2087 / MED4).